A 247-amino-acid polypeptide reads, in one-letter code: Nodulation protein H (247 aa).

The hydrophobic stretch occupies residues Met-1–Pro-17.

In terms of biological role, required for the formation of sulfated nod factor. Proposed to transfer activated sulfate (PAPS) to a N-acetylglucosamine of the nod factor. This is Nodulation protein H (nodH) from Rhizobium meliloti (strain 1021) (Ensifer meliloti).